The sequence spans 495 residues: 3-octaprenyl-4-hydroxybenzoate carboxy-lyase (495 aa).

Position 172 (asparagine 172) interacts with Mn(2+). Prenylated FMN contacts are provided by residues 175 to 177 (IYR), 189 to 191 (RWL), and 194 to 195 (RG). A Mn(2+)-binding site is contributed by glutamate 238. Catalysis depends on aspartate 287, which acts as the Proton donor.

Belongs to the UbiD family. Homohexamer. Prenylated FMN serves as cofactor. The cofactor is Mn(2+).

It is found in the cell membrane. It catalyses the reaction a 4-hydroxy-3-(all-trans-polyprenyl)benzoate + H(+) = a 2-(all-trans-polyprenyl)phenol + CO2. It functions in the pathway cofactor biosynthesis; ubiquinone biosynthesis. Catalyzes the decarboxylation of 3-octaprenyl-4-hydroxy benzoate to 2-octaprenylphenol, an intermediate step in ubiquinone biosynthesis. This Edwardsiella ictaluri (strain 93-146) protein is 3-octaprenyl-4-hydroxybenzoate carboxy-lyase.